Here is a 726-residue protein sequence, read N- to C-terminus: MASRLVAGLQVLALAGTATAVLTWDEAYAKANTALARITQQDKVSLVSGIGWDKGPCVGNTAPVSAINYPQLCLQDGPTGVRFGTGVTAFTPGIQAASTWDVELMRQRGQFQAEEQKGCGVHVMLTPVAGALGKIPEGGRNWEGFGVDPYLAGIAMEVTIEGQQSVGVQATAKHYLLNEQELNRNTMSSNVDDRTLHELYLWPFADAVRANVASVMCSYNKINGSWACENEHAMQKLLKDELGFKGYVMSDWNAQHTTTGSANAGMDMTMPGSDFNGGNVLWGPQLNTAVNNNQVARTRLDDMARRVLAAWYLTEQDKGYPPINIRANVQGNHKENVRAVARDGIVLLKNDAGALPFKAPRRLAIVGSASVANPRGINSCVDRGCNEGALGMGWGSGTTNYPYFSAPADAIRARAQQDGATVTLSASDSTADVANTVRDADAAIVFLTSNSGEGYLLVDGSYGDRLNLDPLHNGNQLVQAVAQANKNTIVVVHSVGPLVLESILSTPGVTAVVWAGLPGQESGNALVDVLYGSVSPSGKLPYTIARATADYGTAIVPGDDNFPEGLFVDYRHFDRANIQPRFEFGYGLSYTNFTYSNIKVASTVRSGPATGPVVSGGRADLWETVATVTATVTNSGGVAGAEVAQLYVSYPKGGSVPETPPRQLRGFNKLKLAPGASGTATFNIRRRDLSYWHVGQQNWVVPAGAFGLEVGASSRDLRLKESITVV.

Positions 1–20 are cleaved as a signal peptide; sequence MASRLVAGLQVLALAGTATA. Residues N223 and N592 are each glycosylated (N-linked (GlcNAc...) asparagine).

This sequence belongs to the glycosyl hydrolase 3 family.

The protein resides in the secreted. The catalysed reaction is Hydrolysis of terminal, non-reducing beta-D-glucosyl residues with release of beta-D-glucose.. Its pathway is glycan metabolism; cellulose degradation. Functionally, beta-glucosidases are one of a number of cellulolytic enzymes involved in the degradation of cellulosic biomass. Catalyzes the last step releasing glucose from the inhibitory cellobiose. Has a broad substrate specificity but preferentially hydrolyzes highly polymerized 1,3- and 1,4-beta-glucans. In Pyricularia oryzae (strain 70-15 / ATCC MYA-4617 / FGSC 8958) (Rice blast fungus), this protein is Beta-glucosidase cel3A.